The chain runs to 212 residues: External core antigen (212 aa).

The first 19 residues, 1–19, serve as a signal peptide directing secretion; sequence MQLFHLCLIISCSCPTVQA. The tract at residues 25-27 is HBEAG; sequence GWL. Residues 165–212 form a disordered region; sequence NAPILSTLPETTVVRRRGRSPRRRTPSPRRRRSQSPRRRRSQSRESQC. A compositionally biased stretch (basic residues) spans 178-205; that stretch reads VRRRGRSPRRRTPSPRRRRSQSPRRRRS. One copy of the 1; half-length repeat lies at 184–190; that stretch reads SPRRRTP. Residues 184–206 form a 3 X 8 AA repeats of S-P-R-R-R-R-S-Q region; the sequence is SPRRRTPSPRRRRSQSPRRRRSQ. A propeptide spanning residues 184 to 212 is cleaved from the precursor; sequence SPRRRTPSPRRRRSQSPRRRRSQSRESQC. Tandem repeats lie at residues 191–198 and 199–206.

Belongs to the orthohepadnavirus precore antigen family. In terms of assembly, homodimerizes. Post-translationally, phosphorylated. Cleaved by host furin.

It localises to the secreted. The protein localises to the host nucleus. Functionally, may regulate immune response to the intracellular capsid in acting as a T-cell tolerogen, by having an immunoregulatory effect which prevents destruction of infected cells by cytotoxic T-cells. This immune regulation may predispose to chronicity during perinatal infections and prevent severe liver injury during adult infections. The protein is External core antigen of Hepatitis B virus genotype C subtype ayw (isolate China/Tibet127/2002) (HBV-C).